Consider the following 569-residue polypeptide: MGSAVMDTKKKKDVSSPGGSGGKKNASQKRRSLRVHIPDLSSFAMPLLDGDLEGSGKHSSRKVDSPFGPGSPSKGFFSRGPQPRPSSPMSAPVRPKTSPGSPKTVFPFSYQESPPRSPRRMSFSGIFRSSSKESSPNSNPATSPGGIRFFSRSRKTSGLSSSPSTPTQVTKQHTFPLESYKHEPERLENRIYASSSPPDTGQRFCPSSFQSPTRPPLASPTHYAPSKAAALAAALGPAEAGMLEKLEFEDEAVEDSESGVYMRFMRSHKCYDIVPTSSKLVVFDTTLQVKKAFFALVANGVRAAPLWESKKQSFVGMLTITDFINILHRYYKSPMVQIYELEEHKIETWRELYLQETFKPLVNISPDASLFDAVYSLIKNKIHRLPVIDPISGNALYILTHKRILKFLQLFMSDMPKPAFMKQNLDELGIGTYHNIAFIHPDTPIIKALNIFVERRISALPVVDESGKVVDIYSKFDVINLAAEKTYNNLDITVTQALQHRSQYFEGVVKCNKLEILETIVDRIVRAEVHRLVVVNEADSIVGIISLSDILQALILTPAGAKQKETETE.

Positions 1–222 (MGSAVMDTKK…TRPPLASPTH (222 aa)) are disordered. A phosphoserine mark is found at Ser-65, Ser-71, Ser-73, Ser-90, Ser-138, Ser-143, Ser-161, and Ser-162. Residues 156–167 (TSGLSSSPSTPT) are compositionally biased toward low complexity. Thr-165 is modified (phosphothreonine). Residues 179–189 (SYKHEPERLEN) show a composition bias toward basic and acidic residues. The span at 192–212 (YASSSPPDTGQRFCPSSFQSP) shows a compositional bias: polar residues. A Phosphoserine modification is found at Ser-196. CBS domains are found at residues 275-335 (PTSS…KSPM), 357-415 (TFKP…MSDM), and 430-492 (IGTY…NLDI). ADP-binding positions include Arg-302, 317-322 (MLTITD), Val-362, 383-384 (HR), and Lys-402. Residues Arg-302, 317–322 (MLTITD), Val-362, His-383, 383–384 (HR), Lys-402, Thr-432, Ala-437, 458–459 (SA), 474–477 (SKFD), Arg-501, His-530, 530–531 (HR), and 546–549 (SLSD) each bind AMP. ATP-binding positions include Arg-302, 317 to 322 (MLTITD), Val-362, 383 to 384 (HR), Arg-384, and Lys-402. An AMPK pseudosubstrate motif is present at residues 370–391 (LFDAVYSLIKNKIHRLPVIDPI). Residues 474–477 (SKFD), Arg-501, and 530–531 (HR) each bind ADP. Residues 474 to 477 (SKFD), Arg-501, and 530 to 531 (HR) contribute to the ATP site. Positions 504–562 (YFEGVVKCNKLEILETIVDRIVRAEVHRLVVVNEADSIVGIISLSDILQALILTPAGAK) constitute a CBS 4 domain.

This sequence belongs to the 5'-AMP-activated protein kinase gamma subunit family. In terms of assembly, AMPK is a heterotrimer of an alpha catalytic subunit (PRKAA1 or PRKAA2), a beta (PRKAB1 or PRKAB2) and a gamma non-catalytic subunits (PRKAG1, PRKAG2 or PRKAG3). Interacts with FNIP1 and FNIP2. Post-translationally, phosphorylated by ULK1; leading to negatively regulate AMPK activity and suggesting the existence of a regulatory feedback loop between ULK1 and AMPK. Glycosylated; O-GlcNAcylated by OGT, promoting the AMP-activated protein kinase (AMPK) activity. In terms of tissue distribution, isoform B is ubiquitously expressed except in liver and thymus. The highest level is detected in heart with abundant expression in placenta and testis.

Functionally, AMP/ATP-binding subunit of AMP-activated protein kinase (AMPK), an energy sensor protein kinase that plays a key role in regulating cellular energy metabolism. In response to reduction of intracellular ATP levels, AMPK activates energy-producing pathways and inhibits energy-consuming processes: inhibits protein, carbohydrate and lipid biosynthesis, as well as cell growth and proliferation. AMPK acts via direct phosphorylation of metabolic enzymes, and by longer-term effects via phosphorylation of transcription regulators. Also acts as a regulator of cellular polarity by remodeling the actin cytoskeleton; probably by indirectly activating myosin. Gamma non-catalytic subunit mediates binding to AMP, ADP and ATP, leading to activate or inhibit AMPK: AMP-binding results in allosteric activation of alpha catalytic subunit (PRKAA1 or PRKAA2) both by inducing phosphorylation and preventing dephosphorylation of catalytic subunits. ADP also stimulates phosphorylation, without stimulating already phosphorylated catalytic subunit. ATP promotes dephosphorylation of catalytic subunit, rendering the AMPK enzyme inactive. The sequence is that of 5'-AMP-activated protein kinase subunit gamma-2 (PRKAG2) from Homo sapiens (Human).